A 172-amino-acid polypeptide reads, in one-letter code: Epithelial membrane protein 2 (172 aa).

A run of 4 helical transmembrane segments spans residues Met1–Ile21, Thr72–Phe92, Phe100–Val120, and Phe148–Leu168.

This sequence belongs to the PMP-22/EMP/MP20 family. In terms of assembly, interacts with PTK2; regulates PTK2 activation and localization. Interacts with ITGB3; regulates the levels of the heterodimer ITGA5-ITGB3 integrin surface expression. Interacts with P2RX7 (via C-terminus). Interacts with ITGB1; the interaction may be direct or indirect and ITGB1 has a heterodimer form. In terms of tissue distribution, expressed in glomeruli.

The protein resides in the golgi apparatus membrane. It is found in the cell membrane. The protein localises to the apical cell membrane. It localises to the membrane raft. Its subcellular location is the cytoplasm. The protein resides in the nucleus. It is found in the perinuclear region. In terms of biological role, functions as a key regulator of cell membrane composition by regulating protein surface expression. Also, plays a role in regulation of processes including cell migration, cell proliferation, cell contraction and cell adhesion. Regulates transepithelial migration of neutrophils into the alveolar lumen, potentially via mediation of cell surface expression of adhesion markers and lipid raft formation. Negatively regulates caveolae formation by reducing CAV1 expression and CAV1 amount by increasing lysosomal degradation. Facilitates surface trafficking and the formation of lipid rafts bearing GPI-anchor proteins. Regulates surface expression of MHC1 and ICAM1 proteins increasing susceptibility to T-cell mediated cytotoxicity. Regulates the plasma membrane expression of the integrin heterodimers ITGA6-ITGB1, ITGA5-ITGB3 and ITGA5-ITGB1 resulting in modulation of cell-matrix adhesion. Also regulates many processes through PTK2. Regulates blood vessel endothelial cell migration and angiogenesis by regulating VEGF protein expression through PTK2 activation. Regulates cell migration and cell contraction through PTK2 and SRC activation. Regulates focal adhesion density, F-actin conformation and cell adhesion capacity through interaction with PTK2. Positively regulates cell proliferation. Plays a role during cell death and cell blebbing. Promotes angiogenesis and vasculogenesis through induction of VEGFA via a HIF1A-dependent pathway. Also plays a role in embryo implantation by regulating surface trafficking of integrin heterodimer ITGA5-ITGB3. Plays a role in placental angiogenesis and uterine natural killer cell regulation at the maternal-fetal placental interface, however not required in the maternal tissues for a viable pregnancy. Involved in the early stages of embryogenic development and cardiogenesis, potentially via regulation of epithelial-mesenchymal transition timing. May play a role in glomerular filtration. This chain is Epithelial membrane protein 2 (Emp2), found in Rattus norvegicus (Rat).